A 321-amino-acid polypeptide reads, in one-letter code: Malate dehydrogenase (321 aa).

Residues glycine 13–glycine 18 and aspartate 38 contribute to the NAD(+) site. Substrate-binding residues include arginine 87 and arginine 93. NAD(+) is bound by residues asparagine 100 and valine 123–asparagine 125. Residues asparagine 125 and arginine 156 each contribute to the substrate site. Catalysis depends on histidine 180, which acts as the Proton acceptor.

It belongs to the LDH/MDH superfamily. MDH type 3 family.

It catalyses the reaction (S)-malate + NAD(+) = oxaloacetate + NADH + H(+). Catalyzes the reversible oxidation of malate to oxaloacetate. The sequence is that of Malate dehydrogenase from Anaplasma phagocytophilum (strain HZ).